A 483-amino-acid polypeptide reads, in one-letter code: MQLEVILPLVAYLVVVFGISVYAMRKRSTGTFLNEYFLGSRSMGGIVLAMTLTATYISASSFIGGPGAAYKYGLGWVLLAMIQLPAVWLSLGILGKKFAILARRYNAVTLNDMLFARYQSRLLVWLASLSLLVAFVGAMTVQFIGGARLLETAAGIPYETGLLIFGISIALYTAFGGFRASVLNDTMQGLVMLIGTVVLLIGVVHAAGGLSNAVQTLQTIDPQLVTPQGADDILSPAFMTSFWVLVCFGVIGLPHTAVRCISYKDSKAVHRGIIIGTIVVAILMFGMHLAGALGRAVIPDLTVPDLVIPTLMVKVLPPFAAGIFLAAPMAAIMSTINAQLLQSSATIIKDLYLNIRPDQMQNETRLKRMSAVITLVLGALLLLAAWKPPEMIIWLNLLAFGGLEAVFLWPLVLGLYWERANAKGALSAMIVGGVLYAVLATLNIQYLGFHPIVPSLLLSLLAFLVGNRFGTSVPQATVLTTDK.

Residues 1 to 2 lie on the Periplasmic side of the membrane; it reads MQ. A helical transmembrane segment spans residues 3-23; that stretch reads LEVILPLVAYLVVVFGISVYA. At 24 to 42 the chain is on the cytoplasmic side; that stretch reads MRKRSTGTFLNEYFLGSRS. Residues 43–63 form a helical membrane-spanning segment; the sequence is MGGIVLAMTLTATYISASSFI. The Periplasmic portion of the chain corresponds to 64-73; that stretch reads GGPGAAYKYG. Residues 74–94 form a helical membrane-spanning segment; that stretch reads LGWVLLAMIQLPAVWLSLGIL. Over 95–123 the chain is Cytoplasmic; sequence GKKFAILARRYNAVTLNDMLFARYQSRLL. A helical membrane pass occupies residues 124-144; that stretch reads VWLASLSLLVAFVGAMTVQFI. Topologically, residues 145-157 are periplasmic; sequence GGARLLETAAGIP. A helical transmembrane segment spans residues 158 to 178; that stretch reads YETGLLIFGISIALYTAFGGF. Topologically, residues 179-189 are cytoplasmic; sequence RASVLNDTMQG. A helical transmembrane segment spans residues 190 to 210; the sequence is LVMLIGTVVLLIGVVHAAGGL. At 211-232 the chain is on the periplasmic side; that stretch reads SNAVQTLQTIDPQLVTPQGADD. A helical transmembrane segment spans residues 233 to 253; the sequence is ILSPAFMTSFWVLVCFGVIGL. Over 254 to 272 the chain is Cytoplasmic; that stretch reads PHTAVRCISYKDSKAVHRG. A helical membrane pass occupies residues 273–293; that stretch reads IIIGTIVVAILMFGMHLAGAL. Residues 294–305 are Periplasmic-facing; it reads GRAVIPDLTVPD. Residues 306 to 326 traverse the membrane as a helical segment; that stretch reads LVIPTLMVKVLPPFAAGIFLA. Over 327–368 the chain is Cytoplasmic; that stretch reads APMAAIMSTINAQLLQSSATIIKDLYLNIRPDQMQNETRLKR. A helical membrane pass occupies residues 369–389; that stretch reads MSAVITLVLGALLLLAAWKPP. Over 390–391 the chain is Periplasmic; that stretch reads EM. The helical transmembrane segment at 392–412 threads the bilayer; that stretch reads IIWLNLLAFGGLEAVFLWPLV. The Cytoplasmic segment spans residues 413 to 423; the sequence is LGLYWERANAK. A helical transmembrane segment spans residues 424–444; sequence GALSAMIVGGVLYAVLATLNI. Residue Q445 is a topological domain, periplasmic. A helical transmembrane segment spans residues 446–466; the sequence is YLGFHPIVPSLLLSLLAFLVG. Topologically, residues 467–483 are cytoplasmic; it reads NRFGTSVPQATVLTTDK.

Belongs to the sodium:solute symporter (SSF) (TC 2.A.21) family.

The protein localises to the cell inner membrane. It carries out the reaction (R)-pantothenate(in) + Na(+)(in) = (R)-pantothenate(out) + Na(+)(out). Its activity is regulated as follows. Pantothenate uptake is not reduced in osmotically shocked cells or by ATP depletion with arsenate, but is reduced greater than 90% by the dissipation of the membrane electrochemical gradient with 2,4-dinitrophenol. Functionally, catalyzes the sodium-dependent uptake of extracellular pantothenate. The chain is Sodium/pantothenate symporter from Escherichia coli (strain K12).